A 598-amino-acid chain; its full sequence is MTKIRNFSIIAHIDHGKSTLADRLIQRAGLVTDRQFRDQILDNMDIERERGITIKSQTVTLPYRSRNGEEVELNLIDTPGHVDFSYEVSRALASCEGVLLLVDASQGVQAQTLANLYAAMEHDLTIIPVINKIDLLSADIENTRAQIESELGLDSSQAVLCSAKEGRGIDDVLEAVVDRIPPPSGKLDAPLSALIFDAHYDSFRGTIVACRVFDGSVRPGDVIRFMSNGATYKVEEVGVFRLSREPKKELRAGMVGYVISGVKTVSDTRVGDTITLDSNPVPAPLPGFKEVKPVVFSSIYPISSDDYLSLADSLEKYKLNDAALIYQKDSSVALGQGFRCGFLGLLHLEIVQERLEREYDQSIIMTFPSVQYVLTLEDGSTTMVDNPQYYPDPIRIRTSAEPFIKASIIIPERYMGAVMKLCLDKRGVNPRFNYPTPGRIEISMEMPLAEVVFDFYDKLKTVTQGYGSFDYDLIEHRVSDLVKLDILVNSEKVDALSLIVHRERAREWAVQVCDRLKEEIPRHQFKIAIQGAIGGKIIARSTVNAFRKDVTAKCYGGDISRKRKLLEKQKKGKKRMKMVGSVMIPQSAFVAVLKADNE.

Positions 2–184 (TKIRNFSIIA…AVVDRIPPPS (183 aa)) constitute a tr-type G domain. Residues 14–19 (DHGKST) and 131–134 (NKID) contribute to the GTP site.

It belongs to the TRAFAC class translation factor GTPase superfamily. Classic translation factor GTPase family. LepA subfamily.

The protein localises to the cell inner membrane. The catalysed reaction is GTP + H2O = GDP + phosphate + H(+). Its function is as follows. Required for accurate and efficient protein synthesis under certain stress conditions. May act as a fidelity factor of the translation reaction, by catalyzing a one-codon backward translocation of tRNAs on improperly translocated ribosomes. Back-translocation proceeds from a post-translocation (POST) complex to a pre-translocation (PRE) complex, thus giving elongation factor G a second chance to translocate the tRNAs correctly. Binds to ribosomes in a GTP-dependent manner. This is Elongation factor 4 from Syntrophobacter fumaroxidans (strain DSM 10017 / MPOB).